A 472-amino-acid chain; its full sequence is D-2-hydroxyglutarate dehydrogenase (472 aa).

The FAD-binding PCMH-type domain maps to 36-215; the sequence is WTPNPLAIAL…VEATLRLTDP (180 aa). 3 residues coordinate (R)-2-hydroxyglutarate: arginine 323, threonine 327, and lysine 337. Residues arginine 323, threonine 327, and lysine 337 each coordinate (R)-malate. Positions 372 and 379 each coordinate Zn(2+). Position 381 (asparagine 381) interacts with (R)-2-hydroxyglutarate. Glutamate 418 lines the Zn(2+) pocket. Histidine 419 is a binding site for (R)-2-hydroxyglutarate. Histidine 419 is a (R)-malate binding site.

This sequence belongs to the FAD-binding oxidoreductase/transferase type 4 family. As to quaternary structure, homodimer. The cofactor is FAD.

It catalyses the reaction (R)-2-hydroxyglutarate + A = 2-oxoglutarate + AH2. It carries out the reaction (R)-malate + A = oxaloacetate + AH2. With respect to regulation, activated by Zn(2+) ions. Its function is as follows. Catalyzes the dehydrogenation of (R)-2-hydroxyglutarate (D-2-hydroxyglutarate) to 2-oxoglutarate. Also has a low activity on D-malate in vitro. Is functionally tied to L-serine biosynthesis, via its coupling with the D-3-phosphoglycerate dehydrogenase SerA, encoded by the adjacent gene in the locus. Active in vitro with the artificial electron acceptor 2,6-dichlorophenolindophenol (DCPIP), but not with NAD, NADP, or cytochrome c. Also displays a very low oxidase activity in vitro on D-2-hydroxyglutarate and L-2-hydroxyglutarate with O2 as the electron acceptor, but this activity is most likely not physiological. This is D-2-hydroxyglutarate dehydrogenase from Xanthomonas citri pv. viticola (strain LMG 965 / NCPPB 2475 / ICMP 3867 / CFBP 7660) (Xanthomonas campestris pv. viticola).